The primary structure comprises 185 residues: Photosystem I assembly protein Ycf4 (185 aa).

2 consecutive transmembrane segments (helical) span residues 21 to 43 and 63 to 85; these read NFFWACILFLGSLGFLAVGASSY and GVVMSFYGIAGLFISSYLWCTIL.

It belongs to the Ycf4 family.

Its subcellular location is the plastid. It is found in the chloroplast thylakoid membrane. Functionally, seems to be required for the assembly of the photosystem I complex. In Saccharum hybrid (Sugarcane), this protein is Photosystem I assembly protein Ycf4.